Consider the following 595-residue polypeptide: NADPH-dependent diflavin oxidoreductase 1 (595 aa).

In terms of domain architecture, Flavodoxin-like spans 6 to 150; sequence VLVLYGSQTG…VIDPWLLSFW (145 aa). FMN contacts are provided by residues 12-17, 59-62, 97-106, and aspartate 132; these read SQTGTA, ATTG, and LGDSSYPKFN. Positions 204-444 constitute an FAD-binding FR-type domain; it reads LRPFPAPLVF…WVKKGSLKFP (241 aa). FAD-binding positions include arginine 348, 380 to 383, and 414 to 417; these read RSFS and GLCS. Residues threonine 458, 513–514, and 519–523 each bind NADP(+); these read SR and KVYVQ. Position 594 (tryptophan 594) interacts with FAD.

Belongs to the NADPH-dependent diflavin oxidoreductase NDOR1 family. The protein in the N-terminal section; belongs to the flavodoxin family. This sequence in the C-terminal section; belongs to the flavoprotein pyridine nucleotide cytochrome reductase family. In terms of assembly, interacts with ciapin1; as part of the cytosolic iron-sulfur (Fe-S) protein assembly (CIA) machinery. FAD is required as a cofactor. FMN serves as cofactor.

Its subcellular location is the cytoplasm. The protein localises to the perinuclear region. The enzyme catalyses 2 oxidized [2Fe-2S]-[protein] + NADPH = 2 reduced [2Fe-2S]-[protein] + NADP(+) + H(+). NADPH-dependent reductase which is a central component of the cytosolic iron-sulfur (Fe-S) protein assembly (CIA) machinery. Transfers electrons from NADPH via its FAD and FMN prosthetic groups to the [2Fe-2S] cluster of ciapin1, another key component of the CIA machinery. In turn, this reduced cluster provides electrons for assembly of cytosolic iron-sulfur cluster proteins. It can also reduce the [2Fe-2S] cluster of cisd1 and activate this protein implicated in Fe/S cluster repair. This chain is NADPH-dependent diflavin oxidoreductase 1, found in Danio rerio (Zebrafish).